The following is a 484-amino-acid chain: uncharacterized protein (484 aa).

Positions 47 to 226 (TLPIPAAVVK…TEVTVKIFKF (180 aa)) constitute an FAD-binding PCMH-type domain.

The protein belongs to the FAD-binding oxidoreductase/transferase type 4 family.

This is an uncharacterized protein from Escherichia coli O157:H7.